Here is a 301-residue protein sequence, read N- to C-terminus: Putative carboxypeptidase slr1534 (301 aa).

S116 serves as the catalytic Nucleophile. Residues E206 and H276 each act as charge relay system in the active site.

This sequence belongs to the peptidase S66 family.

The protein is Putative carboxypeptidase slr1534 of Synechocystis sp. (strain ATCC 27184 / PCC 6803 / Kazusa).